Consider the following 474-residue polypeptide: MADMQNLVERLERAVGRLEAVSHTSDMHCGYGDSPSKGAVPYVQAFDSLLANPVAEYLKMSKEIGGDVQKHAEMVHTGLKLERALLATASQCQQPAGNKLSDLLAPISEQIQEVITFREKNRGSKFFNHLSAVSESIQALGWVALAAKPGPFVKEMNDAAMFYTNRVLKEYRDVDKKHVDWVRAYLSIWTELQAYIKEFHTTGLAWSKTGPVAKELSGLPSGPSVGSGPPPPPPGPPPPPISTSSGSDDSASRSALFAQINQGESITHALKHVSDDMKTHKNPALKAQSGPVRSGPKPFSAPKPQTSPSPKPATKKEPALLELEGKKWRVENQENVSNLVIDDTELKQVAYIYKCVNTTLQIKGKINSITVDNCKKLGLVFDDVVGIVEIINSRDVKVQVMGKVPTISINKTDGCHAYLSKNSLDCEIVSAKSSEMNVLIPTEGGDFNEFPVPEQFKTLWNGQKLVTTVTEIAG.

An N-acetylalanine modification is found at Ala2. At Tyr31 the chain carries Phosphotyrosine. Ser34 carries the phosphoserine modification. Lys80 is modified (N6-acetyllysine). 2 disordered regions span residues 215 to 253 (ELSG…SASR) and 277 to 316 (MKTH…ATKK). Residues 217-227 (SGLPSGPSVGS) show a composition bias toward low complexity. The span at 228 to 241 (GPPPPPPGPPPPPI) shows a compositional bias: pro residues. Lys286 bears the N6-methyllysine mark. Phosphoserine is present on residues Ser289, Ser294, and Ser300. Residues 299-311 (FSAPKPQTSPSPK) show a composition bias toward pro residues. Thr306 carries the phosphothreonine modification. Ser307 and Ser309 each carry phosphoserine. In terms of domain architecture, C-CAP/cofactor C-like spans 312–452 (PATKKEPALL…EGGDFNEFPV (141 aa)). A Glycyl lysine isopeptide (Lys-Gly) (interchain with G-Cter in SUMO1) cross-link involves residue Lys347.

Belongs to the CAP family. In terms of assembly, homodimer. Binds actin monomers. Ubiquitous.

The protein resides in the cell membrane. In terms of biological role, directly regulates filament dynamics and has been implicated in a number of complex developmental and morphological processes, including mRNA localization and the establishment of cell polarity. The sequence is that of Adenylyl cyclase-associated protein 1 (Cap1) from Mus musculus (Mouse).